Reading from the N-terminus, the 152-residue chain is D-aminoacyl-tRNA deacylase (152 aa).

A Gly-cisPro motif, important for rejection of L-amino acids motif is present at residues 142–143 (GP).

This sequence belongs to the DTD family. Homodimer.

The protein resides in the cytoplasm. The catalysed reaction is glycyl-tRNA(Ala) + H2O = tRNA(Ala) + glycine + H(+). It carries out the reaction a D-aminoacyl-tRNA + H2O = a tRNA + a D-alpha-amino acid + H(+). In terms of biological role, an aminoacyl-tRNA editing enzyme that deacylates mischarged D-aminoacyl-tRNAs. Also deacylates mischarged glycyl-tRNA(Ala), protecting cells against glycine mischarging by AlaRS. Acts via tRNA-based rather than protein-based catalysis; rejects L-amino acids rather than detecting D-amino acids in the active site. By recycling D-aminoacyl-tRNA to D-amino acids and free tRNA molecules, this enzyme counteracts the toxicity associated with the formation of D-aminoacyl-tRNA entities in vivo and helps enforce protein L-homochirality. In Paraburkholderia phytofirmans (strain DSM 17436 / LMG 22146 / PsJN) (Burkholderia phytofirmans), this protein is D-aminoacyl-tRNA deacylase.